Reading from the N-terminus, the 281-residue chain is sn-glycerol-3-phosphate transport system permease protein UgpE (281 aa).

6 helical membrane-spanning segments follow: residues 16 to 36 (LILG…AATL), 85 to 105 (FSIT…IVWF), 113 to 133 (FFWM…FPTV), 142 to 162 (LDSY…TFLF), 202 to 222 (ALFV…LLII), and 247 to 267 (WNSV…IVLV). The 192-residue stretch at 77–268 (LLNSFVMAFS…IPPVVIVLVM (192 aa)) folds into the ABC transmembrane type-1 domain.

Belongs to the binding-protein-dependent transport system permease family. UgpAE subfamily. In terms of assembly, the complex is composed of two ATP-binding proteins (UgpC), two transmembrane proteins (UgpA and UgpE) and a solute-binding protein (UgpB).

It is found in the cell inner membrane. In terms of biological role, part of the ABC transporter complex UgpBAEC involved in sn-glycerol-3-phosphate (G3P) import. Probably responsible for the translocation of the substrate across the membrane. Can also transport glycerophosphoryl diesters, which are hydrolyzed to G3P and alcohol during transport. The G3P moiety can be detected in the cytoplasm whereas the corresponding alcohol is usually found in the culture medium. It was proposed by Yang et al that the complex could also transport glycerol-2-phosphate (G2P) in vivo, but it was shown later by Wuttge et al that UgpB does not bind G2P, questioning this transport activity. G2P might be converted in the periplasm to G3P before its transport. The chain is sn-glycerol-3-phosphate transport system permease protein UgpE from Escherichia coli (strain K12).